Consider the following 324-residue polypeptide: Quinolinate synthase (324 aa).

The iminosuccinate site is built by His-39 and Ser-56. Residue Cys-101 coordinates [4Fe-4S] cluster. Residues Tyr-127 to Asn-129 and Ser-144 each bind iminosuccinate. [4Fe-4S] cluster is bound at residue Cys-187. Residues His-213–Glu-215 and Thr-230 contribute to the iminosuccinate site. Cys-280 is a [4Fe-4S] cluster binding site.

The protein belongs to the quinolinate synthase family. Type 2 subfamily. The cofactor is [4Fe-4S] cluster.

It localises to the cytoplasm. It carries out the reaction iminosuccinate + dihydroxyacetone phosphate = quinolinate + phosphate + 2 H2O + H(+). Its pathway is cofactor biosynthesis; NAD(+) biosynthesis; quinolinate from iminoaspartate: step 1/1. Its function is as follows. Catalyzes the condensation of iminoaspartate with dihydroxyacetone phosphate to form quinolinate. The polypeptide is Quinolinate synthase (Nostoc punctiforme (strain ATCC 29133 / PCC 73102)).